Consider the following 84-residue polypeptide: Protein myomixer (84 aa).

Topologically, residues methionine 1 to proline 4 are cytoplasmic. The helical transmembrane segment at leucine 5 to alanine 25 threads the bilayer. The Extracellular segment spans residues arginine 26 to lysine 84. Residues alanine 48 to leucine 57 carry the AxLyCxL motif. Positions serine 62–lysine 84 are disordered.

It belongs to the MYMX family. As to quaternary structure, interacts with MYMK.

It is found in the cell membrane. In terms of biological role, myoblast-specific protein that mediates myoblast fusion, an essential step for the formation of multi-nucleated muscle fibers. Involved in membrane fusion downstream of the lipid mixing step mediated by MYMK. Acts by generating membrane stresses via its extracellular C-terminus, leading to drive fusion pore formation. Acts independently of MYMK. Involved in skeletal muscle regeneration in response to injury by mediating the fusion of satellite cells, a population of muscle stem cells, with injured myofibers. The chain is Protein myomixer from Homo sapiens (Human).